The following is a 245-amino-acid chain: Ribosomal RNA small subunit methyltransferase G (245 aa).

S-adenosyl-L-methionine is bound by residues glycine 85, phenylalanine 90, aspartate 108–threonine 110, alanine 136–glutamate 137, and arginine 155.

Belongs to the methyltransferase superfamily. RNA methyltransferase RsmG family.

Its subcellular location is the cytoplasm. In terms of biological role, specifically methylates the N7 position of a guanine in 16S rRNA. The polypeptide is Ribosomal RNA small subunit methyltransferase G (Trichormus variabilis (strain ATCC 29413 / PCC 7937) (Anabaena variabilis)).